The following is a 288-amino-acid chain: MANAKEIRGQIKSVKNTRKITRAMEMVAASKMRRAQERMRAARPYAEKIREVLGHLAQAHPEYEHPLMQVRPVKKAGFLVVTTDRGLCGGLNVNVLRNVVQKMRELHEEGVESNLAVVGNKGLGFLRRHGAHLVAELNGLGDSPHLGDMIGPIRAMADAYAKGEVDVVYLVSSRFVNTMLQRATVEQLLPVEKPTASAEQRAELWDYIYEPEARPVLDRLMQRYVESVVYQAVIEHLACEQSARMVAMKSASDNAKRMVDDLQLAYNKARQAAITQEIAEISAGAAAV.

This sequence belongs to the ATPase gamma chain family. As to quaternary structure, F-type ATPases have 2 components, CF(1) - the catalytic core - and CF(0) - the membrane proton channel. CF(1) has five subunits: alpha(3), beta(3), gamma(1), delta(1), epsilon(1). CF(0) has three main subunits: a, b and c.

Its subcellular location is the cell inner membrane. Functionally, produces ATP from ADP in the presence of a proton gradient across the membrane. The gamma chain is believed to be important in regulating ATPase activity and the flow of protons through the CF(0) complex. The protein is ATP synthase gamma chain of Acidithiobacillus ferrooxidans (strain ATCC 23270 / DSM 14882 / CIP 104768 / NCIMB 8455) (Ferrobacillus ferrooxidans (strain ATCC 23270)).